Consider the following 826-residue polypeptide: Ubiquitin carboxyl-terminal hydrolase 16 (826 aa).

The UBP-type zinc finger occupies proline 22–alanine 142. Cysteine 24, histidine 26, cysteine 48, cysteine 51, cysteine 74, cysteine 77, cysteine 82, histidine 90, histidine 94, histidine 103, cysteine 116, and cysteine 119 together coordinate Zn(2+). A Glycyl lysine isopeptide (Lys-Gly) (interchain with G-Cter in SUMO2) cross-link involves residue lysine 140. Positions threonine 146 to proline 190 are disordered. The segment covering proline 149–alanine 181 has biased composition (basic and acidic residues). Serine 189 carries the post-translational modification Phosphoserine. The USP domain maps to lysine 196–isoleucine 825. Cysteine 205 (nucleophile) is an active-site residue. A compositionally biased stretch (basic and acidic residues) spans serine 394–methionine 408. A disordered region spans residues serine 394 to isoleucine 460. Acidic residues predominate over residues glutamate 409–aspartate 420. Serine 415 bears the Phosphoserine mark. A compositionally biased stretch (basic and acidic residues) spans asparagine 421 to aspartate 430. Over residues histidine 438–glutamine 458 the composition is skewed to basic residues. Position 552 is a phosphoserine (serine 552). Position 557 is a phosphothreonine (threonine 557). Residue histidine 761 is the Proton acceptor of the active site.

This sequence belongs to the peptidase C19 family. USP16 subfamily. In terms of assembly, homotetramer. Associates with late pre-40S ribosomes. Interacts with CEP78; promoting deubiquitination of tektins. Phosphorylated at the onset of mitosis and dephosphorylated during the metaphase/anaphase transition. Phosphorylation by AURKB enhances the deubiquitinase activity.

It localises to the nucleus. It carries out the reaction Thiol-dependent hydrolysis of ester, thioester, amide, peptide and isopeptide bonds formed by the C-terminal Gly of ubiquitin (a 76-residue protein attached to proteins as an intracellular targeting signal).. Its function is as follows. Specifically deubiquitinates 'Lys-120' of histone H2A (H2AK119Ub), a specific tag for epigenetic transcriptional repression, thereby acting as a coactivator. Deubiquitination of histone H2A is a prerequisite for subsequent phosphorylation at 'Ser-11' of histone H3 (H3S10ph), and is required for chromosome segregation when cells enter into mitosis. In resting B- and T-lymphocytes, phosphorylation by AURKB leads to enhance its activity, thereby maintaining transcription in resting lymphocytes. Regulates Hox gene expression via histone H2A deubiquitination. Prefers nucleosomal substrates. Does not deubiquitinate histone H2B. Also deubiquitinates non-histone proteins, such as ribosomal protein RPS27A: deubiquitination of monoubiquitinated RPS27A promotes maturation of the 40S ribosomal subunit. Also mediates deubiquitination of tektin proteins (TEKT1, TEKT2, TEK3, TEKT4 and TEKT5), promoting their stability. This Macaca fascicularis (Crab-eating macaque) protein is Ubiquitin carboxyl-terminal hydrolase 16.